Reading from the N-terminus, the 412-residue chain is uncharacterized protein (412 aa).

Tandem repeats lie at residues glycine 112 to serine 116, glycine 117 to serine 121, glycine 122 to aspartate 126, glycine 127 to aspartate 131, glycine 132 to serine 136, glycine 137 to aspartate 141, and glycine 142 to serine 146. Residues glycine 112 to serine 146 form a 7 X 5 AA tandem repeats of G-[NS]-[IV]-R-[DS] region. Low complexity predominate over residues serine 116–aspartate 126. The segment at serine 116–lysine 209 is disordered. Over residues asparagine 192 to lysine 209 the composition is skewed to basic and acidic residues.

Belongs to the asfivirus B407L family.

This is an uncharacterized protein from Ornithodoros (relapsing fever ticks).